The sequence spans 721 residues: Catalase-peroxidase (721 aa).

Positions 89 to 212 form a cross-link, tryptophyl-tyrosyl-methioninium (Trp-Tyr) (with M-238); the sequence is WHSAGTYRTG…LAAVQMGLIY (124 aa). His90 serves as the catalytic Proton acceptor. Residues 212–238 constitute a cross-link (tryptophyl-tyrosyl-methioninium (Tyr-Met) (with W-89)); sequence YVNPEGPNGDPDPFAAAVDIRETFARM. His253 is a heme b binding site.

Belongs to the peroxidase family. Peroxidase/catalase subfamily. As to quaternary structure, homodimer or homotetramer. The cofactor is heme b. Formation of the three residue Trp-Tyr-Met cross-link is important for the catalase, but not the peroxidase activity of the enzyme.

The enzyme catalyses H2O2 + AH2 = A + 2 H2O. It carries out the reaction 2 H2O2 = O2 + 2 H2O. Bifunctional enzyme with both catalase and broad-spectrum peroxidase activity. The chain is Catalase-peroxidase from Shewanella baltica (strain OS155 / ATCC BAA-1091).